Consider the following 198-residue polypeptide: MRFDGAQAGWRETPRPGCTLDQRDWLTRGGSLTAHLARLGRVNVRVTREAVDRPWFDEPDALASSPRAPMWVREVILSVDGMPYVAAHSIAPLAASKGVWQAMRRLRTRPLAELLYSDPQVERSALVSRRVIAGHPLYALASHALLGARAPHAFVARRSVFQRHGKPLMVTECMLPALWRHLDAHGDGPRSVGSHGGA.

Positions 73, 111, and 172 each coordinate substrate.

Belongs to the UbiC family.

It localises to the cytoplasm. It catalyses the reaction chorismate = 4-hydroxybenzoate + pyruvate. Its pathway is cofactor biosynthesis; ubiquinone biosynthesis. Functionally, removes the pyruvyl group from chorismate, with concomitant aromatization of the ring, to provide 4-hydroxybenzoate (4HB) for the ubiquinone pathway. This chain is Probable chorismate pyruvate-lyase, found in Burkholderia orbicola (strain AU 1054).